A 291-amino-acid chain; its full sequence is m-AAA protease-interacting protein 1, mitochondrial (291 aa).

A mitochondrion-targeting transit peptide spans 1-96; it reads MALAARLLPL…SLPASPSRSY (96 aa).

As to quaternary structure, interacts with AFG3L2. Interacts with SPG7. Interacts with SMDT1/EMRE (via the N-terminal transit peptide); interaction is direct and takes place before maturation of SMDT1/EMRE.

Its subcellular location is the mitochondrion matrix. Promotes sorting of SMDT1/EMRE in mitochondria by ensuring its maturation. Interacts with the transit peptide region of SMDT1/EMRE precursor protein in the mitochondrial matrix, leading to protect it against protein degradation by YME1L1, thereby ensuring SMDT1/EMRE maturation by the mitochondrial processing peptidase (PMPCA and PMPCB). The sequence is that of m-AAA protease-interacting protein 1, mitochondrial from Mus musculus (Mouse).